Here is a 65-residue protein sequence, read N- to C-terminus: uncharacterized protein (65 aa).

This is an uncharacterized protein from Thermoproteus tenax (TTV1).